Here is a 312-residue protein sequence, read N- to C-terminus: Nodulation protein D 2 (312 aa).

The 58-residue stretch at 6-63 folds into the HTH lysR-type domain; that stretch reads LDLNLLVALDALMTKRSVTAAARSINLSQPAMSAAIARLRTYFGDDLFTMRGRELIPT. A DNA-binding region (H-T-H motif) is located at residues 23–42; it reads VTAAARSINLSQPAMSAAIA.

Belongs to the LysR transcriptional regulatory family.

In terms of biological role, represses the expression of the nodABCIJ-nolO-noeI operon. This Sinorhizobium fredii (strain NBRC 101917 / NGR234) protein is Nodulation protein D 2 (nodD2).